The sequence spans 285 residues: Transcription factor MYB15 (285 aa).

HTH myb-type domains are found at residues 9–61 (KMGL…MNYL) and 62–116 (KPDI…KKRL). 2 DNA-binding regions (H-T-H motif) span residues 37 to 61 (WRAL…MNYL) and 89 to 112 (WSAI…HTHL). A disordered region spans residues 115-172 (RLEDYQPAKPKTSNKKKGTKPKSESVITSSNSTRSESELADSSNPSGESLFSTSPSTS). Over residues 139 to 158 (SVITSSNSTRSESELADSSN) the composition is skewed to polar residues. Low complexity predominate over residues 159–172 (PSGESLFSTSPSTS).

In terms of assembly, interacts with SCRM/ICE1. Expressed in roots, leaves, stems and flowers. Expressed in stomatal guard cells.

Its subcellular location is the nucleus. Transcription factor involved in cold-regulation of CBF genes and in the development of freezing tolerance. May be part of a complex network of transcription factors controlling the expression of CBF genes and other genes in response to cold stress. Binds to the MYB recognition sequences in the promoters of CBF1, CBF2 and CBF3 genes. Involved in drought and salt tolerance. May enhance expression levels of genes involved in abscisic acid (ABA) biosynthesis and signaling, as well as those encoding stress-protective proteins. The polypeptide is Transcription factor MYB15 (Arabidopsis thaliana (Mouse-ear cress)).